Here is a 271-residue protein sequence, read N- to C-terminus: Glutamate racemase (271 aa).

Substrate-binding positions include 9-10 (DS) and 41-42 (YG). Catalysis depends on Cys-72, which acts as the Proton donor/acceptor. 73–74 (NT) is a binding site for substrate. The active-site Proton donor/acceptor is Cys-183. 184–185 (TH) contacts substrate.

It belongs to the aspartate/glutamate racemases family.

It carries out the reaction L-glutamate = D-glutamate. It functions in the pathway cell wall biogenesis; peptidoglycan biosynthesis. Its function is as follows. Provides the (R)-glutamate required for cell wall biosynthesis. The sequence is that of Glutamate racemase from Exiguobacterium sibiricum (strain DSM 17290 / CCUG 55495 / CIP 109462 / JCM 13490 / 255-15).